The primary structure comprises 303 residues: Probable 5-dehydro-4-deoxyglucarate dehydratase (303 aa).

This sequence belongs to the DapA family.

The enzyme catalyses 5-dehydro-4-deoxy-D-glucarate + H(+) = 2,5-dioxopentanoate + CO2 + H2O. Its pathway is carbohydrate acid metabolism; D-glucarate degradation; 2,5-dioxopentanoate from D-glucarate: step 2/2. This chain is Probable 5-dehydro-4-deoxyglucarate dehydratase, found in Polaromonas naphthalenivorans (strain CJ2).